The following is a 25-amino-acid chain: Caerin-1.3 (25 aa).

Leu-25 is modified (leucine amide).

Expressed by the skin parotoid and/or rostral glands.

Its subcellular location is the secreted. Antibacterial peptide, that adopts an alpha helical conformation which can disrupt bacterial membranes. Each caerin displays a different antimicrobial specificity. This Ranoidea caerulea (Green tree frog) protein is Caerin-1.3.